Reading from the N-terminus, the 295-residue chain is UDP-N-acetylenolpyruvoylglucosamine reductase (295 aa).

The 164-residue stretch at 26 to 189 (VGGRADVLFK…VEAEFKGVNS (164 aa)) folds into the FAD-binding PCMH-type domain. Arginine 169 is a catalytic residue. The active-site Proton donor is cysteine 218. Glutamate 288 is a catalytic residue.

This sequence belongs to the MurB family. The cofactor is FAD.

The protein resides in the cytoplasm. The enzyme catalyses UDP-N-acetyl-alpha-D-muramate + NADP(+) = UDP-N-acetyl-3-O-(1-carboxyvinyl)-alpha-D-glucosamine + NADPH + H(+). It participates in cell wall biogenesis; peptidoglycan biosynthesis. Its function is as follows. Cell wall formation. This is UDP-N-acetylenolpyruvoylglucosamine reductase from Wolbachia pipientis wMel.